The following is a 255-amino-acid chain: Octanoyltransferase (255 aa).

Positions Met1–Pro27 are disordered. The 182-residue stretch at Pro59–Thr240 folds into the BPL/LPL catalytic domain. Substrate is bound by residues Arg99–His106, Ala171–Gly173, and Gly184–Ser186. The active-site Acyl-thioester intermediate is Cys202.

Belongs to the LipB family.

It localises to the cytoplasm. The catalysed reaction is octanoyl-[ACP] + L-lysyl-[protein] = N(6)-octanoyl-L-lysyl-[protein] + holo-[ACP] + H(+). Its pathway is protein modification; protein lipoylation via endogenous pathway; protein N(6)-(lipoyl)lysine from octanoyl-[acyl-carrier-protein]: step 1/2. Functionally, catalyzes the transfer of endogenously produced octanoic acid from octanoyl-acyl-carrier-protein onto the lipoyl domains of lipoate-dependent enzymes. Lipoyl-ACP can also act as a substrate although octanoyl-ACP is likely to be the physiological substrate. The chain is Octanoyltransferase from Burkholderia thailandensis (strain ATCC 700388 / DSM 13276 / CCUG 48851 / CIP 106301 / E264).